The chain runs to 473 residues: Putative F-box/LRR-repeat protein At3g59170 (473 aa).

Residues 6–54 form the F-box domain; sequence KDMINVLPDALLCHILSFLTTKEAASTSLLSRRWRYLLAFVPNLEFDDS. LRR repeat units follow at residues 168 to 194, 196 to 221, 229 to 254, 333 to 364, and 365 to 390; these read TIKIRDGPFIDVKHVHLPKLKTLYLQS, MFDENDIGFRKLLSGCPVLEELVLDG, SFTVSVATLKRLTFCCQKMSSFGYMH, VLYLSPETLEVLTYCCKQIPIFENLSHLTIKS, and DPNVGWKPLTKLLKNSPKLETLVFQG.

The polypeptide is Putative F-box/LRR-repeat protein At3g59170 (Arabidopsis thaliana (Mouse-ear cress)).